The primary structure comprises 457 residues: Ribosomal protein uS12 methylthiotransferase RimO (457 aa).

The MTTase N-terminal domain occupies 6–116; that stretch reads PKVGFVSLGC…VMEAVHAALP (111 aa). Residues C15, C51, C80, C147, C151, and C154 each contribute to the [4Fe-4S] cluster site. The Radical SAM core domain occupies 133 to 370; it reads LTPRHYAYLK…MARQAEISAA (238 aa). A TRAM domain is found at 373–441; the sequence is EAKIGSVQQC…EHDLFGDALP (69 aa).

Belongs to the methylthiotransferase family. RimO subfamily. [4Fe-4S] cluster serves as cofactor.

It localises to the cytoplasm. It catalyses the reaction L-aspartate(89)-[ribosomal protein uS12]-hydrogen + (sulfur carrier)-SH + AH2 + 2 S-adenosyl-L-methionine = 3-methylsulfanyl-L-aspartate(89)-[ribosomal protein uS12]-hydrogen + (sulfur carrier)-H + 5'-deoxyadenosine + L-methionine + A + S-adenosyl-L-homocysteine + 2 H(+). In terms of biological role, catalyzes the methylthiolation of an aspartic acid residue of ribosomal protein uS12. This Xanthomonas campestris pv. campestris (strain 8004) protein is Ribosomal protein uS12 methylthiotransferase RimO.